We begin with the raw amino-acid sequence, 747 residues long: Polyribonucleotide nucleotidyltransferase (747 aa).

Mg(2+) contacts are provided by aspartate 487 and aspartate 493. The KH domain maps to 554–613; sequence PSTTTIKIDKDKIRDIIGPGGKIIKEICETSGAKIDISDDGTVSVYAADRDKLKIASDKI. The region spanning 623 to 691 is the S1 motif domain; it reads GEIFNGTVTK…NKGKAKLTIK (69 aa). Residues 694 to 716 form a disordered region; the sequence is DKDKSLNNPKPQNSINNAKENSE. Over residues 699–712 the composition is skewed to polar residues; sequence LNNPKPQNSINNAK.

It belongs to the polyribonucleotide nucleotidyltransferase family. Mg(2+) serves as cofactor.

Its subcellular location is the cytoplasm. It carries out the reaction RNA(n+1) + phosphate = RNA(n) + a ribonucleoside 5'-diphosphate. Involved in mRNA degradation. Catalyzes the phosphorolysis of single-stranded polyribonucleotides processively in the 3'- to 5'-direction. The chain is Polyribonucleotide nucleotidyltransferase from Rickettsia canadensis (strain McKiel).